A 515-amino-acid polypeptide reads, in one-letter code: 2,3-bisphosphoglycerate-independent phosphoglycerate mutase (515 aa).

Mn(2+)-binding residues include aspartate 14 and serine 64. The Phosphoserine intermediate role is filled by serine 64. Substrate contacts are provided by residues histidine 125, 155–156 (RD), arginine 187, arginine 193, 263–266 (RADR), and lysine 337. Residues aspartate 404, histidine 408, aspartate 445, histidine 446, and histidine 464 each contribute to the Mn(2+) site.

This sequence belongs to the BPG-independent phosphoglycerate mutase family. In terms of assembly, monomer. Requires Mn(2+) as cofactor.

The enzyme catalyses (2R)-2-phosphoglycerate = (2R)-3-phosphoglycerate. It functions in the pathway carbohydrate degradation; glycolysis; pyruvate from D-glyceraldehyde 3-phosphate: step 3/5. Functionally, catalyzes the interconversion of 2-phosphoglycerate and 3-phosphoglycerate. The chain is 2,3-bisphosphoglycerate-independent phosphoglycerate mutase from Cronobacter sakazakii (strain ATCC BAA-894) (Enterobacter sakazakii).